The chain runs to 512 residues: Kynurenine 3-monooxygenase (512 aa).

It belongs to the aromatic-ring hydroxylase family. KMO subfamily. Requires FAD as cofactor.

Its subcellular location is the mitochondrion outer membrane. The catalysed reaction is L-kynurenine + NADPH + O2 + H(+) = 3-hydroxy-L-kynurenine + NADP(+) + H2O. It functions in the pathway cofactor biosynthesis; NAD(+) biosynthesis; quinolinate from L-kynurenine: step 1/3. Catalyzes the hydroxylation of L-kynurenine (L-Kyn) to form 3-hydroxy-L-kynurenine (L-3OHKyn). Required for synthesis of quinolinic acid. The protein is Kynurenine 3-monooxygenase (nic-3) of Neurospora crassa (strain ATCC 24698 / 74-OR23-1A / CBS 708.71 / DSM 1257 / FGSC 987).